The chain runs to 237 residues: Phosphoribosylaminoimidazole-succinocarboxamide synthase (237 aa).

It belongs to the SAICAR synthetase family.

It carries out the reaction 5-amino-1-(5-phospho-D-ribosyl)imidazole-4-carboxylate + L-aspartate + ATP = (2S)-2-[5-amino-1-(5-phospho-beta-D-ribosyl)imidazole-4-carboxamido]succinate + ADP + phosphate + 2 H(+). Its pathway is purine metabolism; IMP biosynthesis via de novo pathway; 5-amino-1-(5-phospho-D-ribosyl)imidazole-4-carboxamide from 5-amino-1-(5-phospho-D-ribosyl)imidazole-4-carboxylate: step 1/2. The chain is Phosphoribosylaminoimidazole-succinocarboxamide synthase from Cronobacter sakazakii (strain ATCC BAA-894) (Enterobacter sakazakii).